Consider the following 234-residue polypeptide: Demethylmenaquinone methyltransferase (234 aa).

S-adenosyl-L-methionine is bound by residues Thr58, Asp79, and 106–107 (NA).

This sequence belongs to the class I-like SAM-binding methyltransferase superfamily. MenG/UbiE family.

It catalyses the reaction a 2-demethylmenaquinol + S-adenosyl-L-methionine = a menaquinol + S-adenosyl-L-homocysteine + H(+). It functions in the pathway quinol/quinone metabolism; menaquinone biosynthesis; menaquinol from 1,4-dihydroxy-2-naphthoate: step 2/2. Its function is as follows. Methyltransferase required for the conversion of demethylmenaquinol (DMKH2) to menaquinol (MKH2). In Geobacillus kaustophilus (strain HTA426), this protein is Demethylmenaquinone methyltransferase.